A 442-amino-acid chain; its full sequence is Proline--tRNA ligase (442 aa).

Belongs to the class-II aminoacyl-tRNA synthetase family. ProS type 2 subfamily. In terms of assembly, homodimer.

It is found in the cytoplasm. It carries out the reaction tRNA(Pro) + L-proline + ATP = L-prolyl-tRNA(Pro) + AMP + diphosphate. In terms of biological role, catalyzes the attachment of proline to tRNA(Pro) in a two-step reaction: proline is first activated by ATP to form Pro-AMP and then transferred to the acceptor end of tRNA(Pro). This Rhizobium meliloti (strain 1021) (Ensifer meliloti) protein is Proline--tRNA ligase.